A 467-amino-acid chain; its full sequence is UDP-glycosyltransferase 71D2 (467 aa).

Residues serine 283, 339 to 341 (SPQ), 356 to 364 (HCGWNSIVE), and 378 to 381 (YAEQ) each bind UDP-alpha-D-glucose.

The protein belongs to the UDP-glycosyltransferase family.

The sequence is that of UDP-glycosyltransferase 71D2 (UGT71D2) from Arabidopsis thaliana (Mouse-ear cress).